Reading from the N-terminus, the 378-residue chain is Ribosomal RNA large subunit methyltransferase G (378 aa).

The protein belongs to the methyltransferase superfamily. RlmG family.

It is found in the cytoplasm. The enzyme catalyses guanosine(1835) in 23S rRNA + S-adenosyl-L-methionine = N(2)-methylguanosine(1835) in 23S rRNA + S-adenosyl-L-homocysteine + H(+). Its function is as follows. Specifically methylates the guanine in position 1835 (m2G1835) of 23S rRNA. The sequence is that of Ribosomal RNA large subunit methyltransferase G from Escherichia coli O139:H28 (strain E24377A / ETEC).